We begin with the raw amino-acid sequence, 638 residues long: DEAD-box ATP-dependent RNA helicase 52B (638 aa).

2 stretches are compositionally biased toward low complexity: residues 1-21 (MRSSWADSAANAEESAPAAAA) and 40-67 (GQAAPAAPAQAGALPSAAAAAQPSVGQP). Residues 1 to 129 (MRSSWADSAA…WDRRDREPDP (129 aa)) form a disordered region. Residues 79–112 (VNGGGGGGGGSVGGSRQGFGAGGRGGGGGGGGGA) show a composition bias toward gly residues. Basic and acidic residues predominate over residues 119-128 (GWDRRDREPD). The short motif at 169-197 (NTFAEIDLGDALNENIRRCKYVKPTPVQR) is the Q motif element. In terms of domain architecture, Helicase ATP-binding spans 200 to 384 (IPISIAGRDL…SDFLADYIFL (185 aa)). 213 to 220 (AQTGSGKT) contributes to the ATP binding site. Positions 328 to 331 (DEAD) match the DEAD box motif. The 152-residue stretch at 411 to 562 (YLMDLLHAQR…EVPQWLERYA (152 aa)) folds into the Helicase C-terminal domain. A disordered region spans residues 565–638 (SSFGGGGGRN…GGQGFSSAWD (74 aa)). Over residues 567-583 (FGGGGGRNRRSGGGARF) the composition is skewed to gly residues. The span at 584-593 (GGRDFRRDRG) shows a compositional bias: basic and acidic residues. The span at 594 to 632 (SGGGGYGGGGGGYGGGGYGGGGGGGGYGGGSSYGGGGQG) shows a compositional bias: gly residues.

Belongs to the DEAD box helicase family. DDX3/DED1 subfamily.

The catalysed reaction is ATP + H2O = ADP + phosphate + H(+). The chain is DEAD-box ATP-dependent RNA helicase 52B (PL10B) from Oryza sativa subsp. japonica (Rice).